A 356-amino-acid polypeptide reads, in one-letter code: RuBisCO accumulation factor 1 (356 aa).

Positions 7–185 are N-terminal alpha-helix; the sequence is ALTTEVLQRL…RQALEKLLTD (179 aa). A C-terminal beta-sheet region spans residues 209 to 342; sequence PYLVPVAGTA…LLLVLRPPQV (134 aa).

Belongs to the RAF family. In terms of assembly, homodimer. Forms an RbcL(8)-Raf1(8) complex. Forms complexes of many stoichiometries with RbcL with and without RbcS. RbcX and Raf1 can bind simultaneously to RbcL.

The protein localises to the cytoplasm. In terms of biological role, a major RuBisCO chaperone. Acts after GroEL-GroES chaperonin to fold and/or assemble the large subunit of RuBisCO (ccbL, rbcL). Cooperates with RbcX in RbcL folding, plays the major role in assembly of dimers into RbcL(8)-Raf1(8) intermediate complexes. RbcS replaces Raf1, leading to holoenzyme formation. Its function is as follows. Required for optimal reconstitution of RuBisCO upon expression of rbcL-rbcS subunits in E.coli. Only interacts with the large subunit (cbbL, rbcL). Probably acts in the final stages of RuBisCO assembly, possibly participating in the addition of the small subunit (ccbS, rbcS). In Thermosynechococcus vestitus (strain NIES-2133 / IAM M-273 / BP-1), this protein is RuBisCO accumulation factor 1.